A 317-amino-acid polypeptide reads, in one-letter code: Porphobilinogen deaminase (317 aa).

Cys-245 is subject to S-(dipyrrolylmethanemethyl)cysteine.

It belongs to the HMBS family. Monomer. Dipyrromethane is required as a cofactor.

The enzyme catalyses 4 porphobilinogen + H2O = hydroxymethylbilane + 4 NH4(+). Its pathway is porphyrin-containing compound metabolism; protoporphyrin-IX biosynthesis; coproporphyrinogen-III from 5-aminolevulinate: step 2/4. It functions in the pathway porphyrin-containing compound metabolism; chlorophyll biosynthesis. In terms of biological role, tetrapolymerization of the monopyrrole PBG into the hydroxymethylbilane pre-uroporphyrinogen in several discrete steps. This chain is Porphobilinogen deaminase, found in Parasynechococcus marenigrum (strain WH8102).